Reading from the N-terminus, the 415-residue chain is tRNA(Met) cytidine acetate ligase (415 aa).

Residues 7–20 (IVEY…HLYH), G102, N165, and 190–191 (RI) contribute to the ATP site.

Belongs to the TmcAL family.

It is found in the cytoplasm. It carries out the reaction cytidine(34) in elongator tRNA(Met) + acetate + ATP = N(4)-acetylcytidine(34) in elongator tRNA(Met) + AMP + diphosphate. In terms of biological role, catalyzes the formation of N(4)-acetylcytidine (ac(4)C) at the wobble position of elongator tRNA(Met), using acetate and ATP as substrates. First activates an acetate ion to form acetyladenylate (Ac-AMP) and then transfers the acetyl group to tRNA to form ac(4)C34. The sequence is that of tRNA(Met) cytidine acetate ligase from Acetivibrio thermocellus (strain ATCC 27405 / DSM 1237 / JCM 9322 / NBRC 103400 / NCIMB 10682 / NRRL B-4536 / VPI 7372) (Clostridium thermocellum).